The following is a 502-amino-acid chain: Tubulin gamma chain (502 aa).

Over residues 51–68 (ELNNSGSSPQSYPQQTKP) the composition is skewed to polar residues. The segment at 51–73 (ELNNSGSSPQSYPQQTKPNGKYR) is disordered. GTP is bound at residue 169–175 (AGGTGSG). The segment covering 473 to 482 (DDEDDLEDGD) has biased composition (acidic residues). The segment at 473–502 (DDEDDLEDGDGGGGGNGNGYNNIDDADMGI) is disordered.

The protein belongs to the tubulin family.

It localises to the cytoplasm. The protein resides in the cytoskeleton. Its subcellular location is the microtubule organizing center. It is found in the spindle pole body. Functionally, tubulin is the major constituent of microtubules. The gamma chain is found at microtubule organizing centers (MTOC) such as the spindle poles or the centrosome, suggesting that it is involved in the minus-end nucleation of microtubule assembly. In Candida albicans (Yeast), this protein is Tubulin gamma chain (TUB4).